We begin with the raw amino-acid sequence, 447 residues long: GTPase Der (447 aa).

EngA-type G domains lie at 3–167 (PVIA…VQER) and 181–354 (VKIA…AAAM). GTP is bound by residues 9–16 (GRPNVGKS), 56–60 (DTGGF), 119–122 (NKAE), 187–194 (GRPNVGKS), 234–238 (DTAGL), and 299–302 (NKWD). A KH-like domain is found at 355–439 (IKLPTPQITR…PLRIEFRTNK (85 aa)).

It belongs to the TRAFAC class TrmE-Era-EngA-EngB-Septin-like GTPase superfamily. EngA (Der) GTPase family. As to quaternary structure, associates with the 50S ribosomal subunit.

Functionally, GTPase that plays an essential role in the late steps of ribosome biogenesis. In Cupriavidus metallidurans (strain ATCC 43123 / DSM 2839 / NBRC 102507 / CH34) (Ralstonia metallidurans), this protein is GTPase Der.